A 358-amino-acid chain; its full sequence is Membrane-bound lytic murein transglycosylase C (358 aa).

The first 16 residues, 1–16, serve as a signal peptide directing secretion; the sequence is MKKILALLVIAPLLVS. Residue cysteine 17 is the site of N-palmitoyl cysteine attachment. Residue cysteine 17 is the site of S-diacylglycerol cysteine attachment.

It belongs to the transglycosylase Slt family.

The protein localises to the cell outer membrane. It catalyses the reaction Exolytic cleavage of the (1-&gt;4)-beta-glycosidic linkage between N-acetylmuramic acid (MurNAc) and N-acetylglucosamine (GlcNAc) residues in peptidoglycan, from either the reducing or the non-reducing ends of the peptidoglycan chains, with concomitant formation of a 1,6-anhydrobond in the MurNAc residue.. Functionally, murein-degrading enzyme. May play a role in recycling of muropeptides during cell elongation and/or cell division. The polypeptide is Membrane-bound lytic murein transglycosylase C (Yersinia enterocolitica serotype O:8 / biotype 1B (strain NCTC 13174 / 8081)).